We begin with the raw amino-acid sequence, 306 residues long: tRNA dimethylallyltransferase (306 aa).

G9 to T16 contributes to the ATP binding site. T11–T16 provides a ligand contact to substrate. Residues D34–Q37 are interaction with substrate tRNA.

It belongs to the IPP transferase family. In terms of assembly, monomer. It depends on Mg(2+) as a cofactor.

It catalyses the reaction adenosine(37) in tRNA + dimethylallyl diphosphate = N(6)-dimethylallyladenosine(37) in tRNA + diphosphate. Its function is as follows. Catalyzes the transfer of a dimethylallyl group onto the adenine at position 37 in tRNAs that read codons beginning with uridine, leading to the formation of N6-(dimethylallyl)adenosine (i(6)A). The chain is tRNA dimethylallyltransferase from Lactobacillus johnsonii (strain CNCM I-12250 / La1 / NCC 533).